The primary structure comprises 726 residues: Kinesin-like protein KIN-10B (726 aa).

3 disordered regions span residues 1-20 (MEQQQKQEPGGGGGGVRVVA), 60-82 (AATAAASGRGDGPKDKQQQQQQK), and 402-423 (KNARPGFNNSGVKGGQTPTANR). One can recognise a Kinesin motor domain in the interval 15-359 (GVRVVARICP…LALASRSSQV (345 aa)). Polar residues predominate over residues 408–423 (FNNSGVKGGQTPTANR).

The protein belongs to the TRAFAC class myosin-kinesin ATPase superfamily. Kinesin family. KIN-10 subfamily.

The protein is Kinesin-like protein KIN-10B of Oryza sativa subsp. japonica (Rice).